Here is a 416-residue protein sequence, read N- to C-terminus: Enolase (416 aa).

Residue Gln-160 coordinates (2R)-2-phosphoglycerate. Glu-204 functions as the Proton donor in the catalytic mechanism. Mg(2+) contacts are provided by Asp-239, Glu-280, and Asp-306. Residues Lys-331, Arg-360, Ser-361, and Lys-382 each coordinate (2R)-2-phosphoglycerate. The Proton acceptor role is filled by Lys-331.

Belongs to the enolase family. Mg(2+) serves as cofactor.

It is found in the cytoplasm. The protein resides in the secreted. Its subcellular location is the cell surface. It carries out the reaction (2R)-2-phosphoglycerate = phosphoenolpyruvate + H2O. The protein operates within carbohydrate degradation; glycolysis; pyruvate from D-glyceraldehyde 3-phosphate: step 4/5. Its function is as follows. Catalyzes the reversible conversion of 2-phosphoglycerate (2-PG) into phosphoenolpyruvate (PEP). It is essential for the degradation of carbohydrates via glycolysis. This is Enolase from Sulfolobus acidocaldarius (strain ATCC 33909 / DSM 639 / JCM 8929 / NBRC 15157 / NCIMB 11770).